Here is a 337-residue protein sequence, read N- to C-terminus: HTH-type transcriptional regulator MalR (337 aa).

The HTH lacI-type domain occupies 1–56; that stretch reads MVTIKDIAQAANVSTSTVSRVISGNPRISMQTREKVKATMKSFNYQPNRAARTLAT. Residues 4–23 constitute a DNA-binding region (H-T-H motif); sequence IKDIAQAANVSTSTVSRVIS.

Functionally, transcriptional repressor of the malA gene for maltase. This chain is HTH-type transcriptional regulator MalR (malR), found in Staphylococcus xylosus.